The following is a 121-amino-acid chain: Large ribosomal subunit protein uL14c (121 aa).

It belongs to the universal ribosomal protein uL14 family. In terms of assembly, part of the 50S ribosomal subunit.

It localises to the plastid. The protein resides in the chloroplast. In terms of biological role, binds to 23S rRNA. The protein is Large ribosomal subunit protein uL14c of Tetradesmus obliquus (Green alga).